Consider the following 270-residue polypeptide: MAMGTRYAGKVVIVTGGGRGIGAGIVRAFVESGAQVVICDKDEARGRAVERELPGTVFLLCDVTREEDVRTLVSETIRRFGRLDCIVNNAGYHPPPQWPEETSAQGFRQLLELNLLGTYTLTKLALPHLRKSRGNVINISSLVGAIGQSQAVPYVATKGAVTAMTKALALDESQYGVRVNCISPGNIWTPLWEELAASTPDPTATIREGTLAQPLGRMGQPAEVAAAAVFLASEATFCTGTELLVTGGAELGYGRKAGQAAPAEAPTTPS.

Residues R19, I21, D40, K41, D62, V63, N89, Y154, K158, I187, T189, and L191 each coordinate NAD(+). Residue Y154 is the Proton acceptor of the active site.

The protein belongs to the short-chain dehydrogenases/reductases (SDR) family. In terms of assembly, homotetramer. As to expression, detected in retina.

Its subcellular location is the cytoplasm. It catalyses the reaction L-fucose + NAD(+) = L-fucono-1,5-lactone + NADH + H(+). It carries out the reaction D-arabinose + NAD(+) = D-arabinono-1,5-lactone + NADH + H(+). The enzyme catalyses L-galactose + NAD(+) = L-galactono-1,5-lactone + NADH + H(+). It functions in the pathway carbohydrate degradation; L-fucose degradation. Functionally, catalyzes the NAD(+)-dependent oxidation of L-fucose, yielding L-fucono-1,5-lactone, which rapidly converts spontaneously to L-fucone-1,4-lactone. Can also act on D-arabinose and L-galactose, with lower catalytic efficiency. Does not use NADPH. May be the initial enzyme of the putative L-fucose degradation pathway in mammals. This chain is L-fucose dehydrogenase (HSD17B14), found in Bos taurus (Bovine).